Reading from the N-terminus, the 242-residue chain is Peptidyl-prolyl cis-trans isomerase FKBP20-2, chloroplastic (242 aa).

The transit peptide at 1–31 (MVTILSTPLSPRLTFLCETKLSLSRSNRSVC) directs the protein to the chloroplast. The N-terminal 36 residues, 32–67 (CSLSEEPKDQCLSRRSLVYVLVASPCLLLPALSSSA), are a transit peptide targeting the thylakoid. One can recognise a PPIase FKBP-type domain in the interval 138–225 (GQQVTFHYIG…VFDVELLSIQ (88 aa)). Cysteines 227 and 241 form a disulfide.

Belongs to the FKBP-type PPIase family. As to quaternary structure, interacts in vitro with LTO1.

Its subcellular location is the plastid. The protein resides in the chloroplast thylakoid lumen. The catalysed reaction is [protein]-peptidylproline (omega=180) = [protein]-peptidylproline (omega=0). Its function is as follows. PPIases accelerate the folding of proteins. It catalyzes the cis-trans isomerization of proline imidic peptide bonds in oligopeptides. Involved in the accumulation of the PSII complex. The chain is Peptidyl-prolyl cis-trans isomerase FKBP20-2, chloroplastic from Arabidopsis thaliana (Mouse-ear cress).